Here is a 494-residue protein sequence, read N- to C-terminus: Sugiol synthase (494 aa).

A helical membrane pass occupies residues 3-23 (SFSLLAALFFISAATWFISSR). Heme is bound at residue Cys-437.

The protein belongs to the cytochrome P450 family. Requires heme as cofactor. In terms of tissue distribution, expressed in roots.

It is found in the membrane. It carries out the reaction ferruginol + 2 reduced [NADPH--hemoprotein reductase] + 2 O2 = sugiol + 2 oxidized [NADPH--hemoprotein reductase] + 3 H2O + 2 H(+). It catalyses the reaction ferruginol + reduced [NADPH--hemoprotein reductase] + O2 = 11-hydroxyferruginol + oxidized [NADPH--hemoprotein reductase] + H2O + H(+). The enzyme catalyses 11-hydroxyferruginol + 2 reduced [NADPH--hemoprotein reductase] + 2 O2 = 11-hydroxysugiol + 2 oxidized [NADPH--hemoprotein reductase] + 3 H2O + 2 H(+). It participates in secondary metabolite biosynthesis; terpenoid biosynthesis. Functionally, monooxygenase that oxidizes ferruginol to produce sugiol. Oxidizes ferruginol at C-12 to produce 11-hydroxyferruginol. Can oxidize 11-hydroxyferruginol to 11-hydroxysugiol. These products are intermediates in tanshinone biosynthesis. The polypeptide is Sugiol synthase (Salvia miltiorrhiza (Chinese sage)).